The sequence spans 149 residues: Large ribosomal subunit protein eL8 (149 aa).

This sequence belongs to the eukaryotic ribosomal protein eL8 family. Part of the 50S ribosomal subunit. Probably part of the RNase P complex.

It localises to the cytoplasm. In terms of biological role, multifunctional RNA-binding protein that recognizes the K-turn motif in ribosomal RNA, the RNA component of RNase P, box H/ACA, box C/D and box C'/D' sRNAs. This chain is Large ribosomal subunit protein eL8, found in Pyrobaculum calidifontis (strain DSM 21063 / JCM 11548 / VA1).